The primary structure comprises 310 residues: Zinc finger protein-like 1 (310 aa).

The segment at 1 to 43 (MGLCKCPKRKVTNLFCFEHRVNVCEHCLVANHAKCIVQSYLQW) adopts a B box-type; degenerate zinc-finger fold. The Cytoplasmic segment spans residues 1–266 (MGLCKCPKRK…RPLTLLQRAG (266 aa)). Residues 53 to 101 (CRLCNIPLASRETTRLVCYDLFHWACLNERAAQLPRNTAPAGYQCPSCN) form an RING-type; degenerate zinc finger. The interval 145 to 231 (PEPLNTSDFS…RTPGLHGDCD (87 aa)) is disordered. Polar residues predominate over residues 148–165 (LNTSDFSDWSSFNASSTP). Residues 213–224 (KVYDTRDDDRTP) show a composition bias toward basic and acidic residues. A helical transmembrane segment spans residues 267-287 (LLLLLGLLGFLALLALMSRLG). Over 288 to 310 (RAAADSDPNLDPLMNPHIRVGPS) the chain is Lumenal.

The protein belongs to the ZFPL1 family. In terms of assembly, interacts with GOLGA2/GM130. Phosphorylated. As to expression, expressed strongly in the exocrine pancreas.

It localises to the golgi apparatus. The protein resides in the cis-Golgi network membrane. Required for cis-Golgi integrity and efficient ER to Golgi transport. Involved in the maintenance of the integrity of the cis-Golgi, possibly via its interaction with GOLGA2/GM130. This Homo sapiens (Human) protein is Zinc finger protein-like 1 (ZFPL1).